The chain runs to 199 residues: GTP-binding protein Di-Ras2 (199 aa).

Residues 14–21 (GAGGVGKS), 33–39 (RESYIPT), 61–65 (DTTGS), and 121–124 (NKCD) each bind GTP. At S35 the chain carries Phosphoserine. The short motif at 36-44 (YIPTVEDTY) is the Effector region element. S126 is modified (phosphoserine). Residue 152–153 (AK) participates in GTP binding. A Cysteine methyl ester modification is found at C196. Residue C196 is the site of S-geranylgeranyl cysteine attachment. A propeptide spans 197-199 (VIM) (removed in mature form).

Belongs to the small GTPase superfamily. Di-Ras family. In terms of processing, ubiquitinated by the ECS(ASB11) complex via 'Lys-11'-linked ubiquitin chains, leading to its degradation by the proteasome.

It is found in the cell membrane. It carries out the reaction GTP + H2O = GDP + phosphate + H(+). Displays low GTPase activity and exists predominantly in the GTP-bound form. The polypeptide is GTP-binding protein Di-Ras2 (DIRAS2) (Pongo abelii (Sumatran orangutan)).